The following is a 77-amino-acid chain: U14-theraphotoxin-Cg1b (77 aa).

Positions 1 to 21 are cleaved as a signal peptide; the sequence is MKTSVLLVILGIAAITVQCTA. A propeptide spanning residues 22 to 49 is cleaved from the precursor; the sequence is SESVEQDSLRTFVDAVLGWNAEMASEAR. 3 disulfide bridges follow: Cys50–Cys64, Cys57–Cys69, and Cys63–Cys75.

The protein belongs to the neurotoxin 10 (Hwtx-1) family. 65 (Jztx-21) subfamily. In terms of tissue distribution, expressed by the venom gland.

It localises to the secreted. Its function is as follows. Probable ion channel inhibitor. The polypeptide is U14-theraphotoxin-Cg1b (Chilobrachys guangxiensis (Chinese earth tiger tarantula)).